The chain runs to 35 residues: Endochitinase 2 (35 aa).

This sequence belongs to the glycosyl hydrolase 19 family. Chitinase class I subfamily.

It carries out the reaction Random endo-hydrolysis of N-acetyl-beta-D-glucosaminide (1-&gt;4)-beta-linkages in chitin and chitodextrins.. Its function is as follows. Defense against chitin-containing fungal pathogens. This Capsicum chinense (Scotch bonnet) protein is Endochitinase 2.